The sequence spans 560 residues: Proline--tRNA ligase (560 aa).

The protein belongs to the class-II aminoacyl-tRNA synthetase family. ProS type 1 subfamily. In terms of assembly, homodimer.

The protein localises to the cytoplasm. The catalysed reaction is tRNA(Pro) + L-proline + ATP = L-prolyl-tRNA(Pro) + AMP + diphosphate. In terms of biological role, catalyzes the attachment of proline to tRNA(Pro) in a two-step reaction: proline is first activated by ATP to form Pro-AMP and then transferred to the acceptor end of tRNA(Pro). As ProRS can inadvertently accommodate and process non-cognate amino acids such as alanine and cysteine, to avoid such errors it has two additional distinct editing activities against alanine. One activity is designated as 'pretransfer' editing and involves the tRNA(Pro)-independent hydrolysis of activated Ala-AMP. The other activity is designated 'posttransfer' editing and involves deacylation of mischarged Ala-tRNA(Pro). The misacylated Cys-tRNA(Pro) is not edited by ProRS. The sequence is that of Proline--tRNA ligase from Vesicomyosocius okutanii subsp. Calyptogena okutanii (strain HA).